A 1571-amino-acid chain; its full sequence is Pentafunctional AROM polypeptide (1571 aa).

Positions 1 to 380 (MTSVEKVSIL…YQLKAHQVSK (380 aa)) are 3-dehydroquinate synthase. NAD(+) contacts are provided by residues 43–45 (DTN), 81–84 (ENNK), 112–114 (GGV), and aspartate 117. Arginine 128 serves as a coordination point for 7-phospho-2-dehydro-3-deoxy-D-arabino-heptonate. An NAD(+)-binding site is contributed by 137–138 (TS). Positions 144 and 150 each coordinate 7-phospho-2-dehydro-3-deoxy-D-arabino-heptonate. An NAD(+)-binding site is contributed by lysine 159. Asparagine 160 lines the 7-phospho-2-dehydro-3-deoxy-D-arabino-heptonate pocket. NAD(+) contacts are provided by residues 177 to 180 (FLET) and asparagine 188. Residue glutamate 192 participates in Zn(2+) binding. Residues 192-195 (EVVK) and lysine 244 contribute to the 7-phospho-2-dehydro-3-deoxy-D-arabino-heptonate site. The Proton acceptor; for 3-dehydroquinate synthase activity role is filled by glutamate 254. 7-phospho-2-dehydro-3-deoxy-D-arabino-heptonate is bound by residues 258 to 262 (RNLLN) and histidine 265. Histidine 265 contacts Zn(2+). Histidine 269 (proton acceptor; for 3-dehydroquinate synthase activity) is an active-site residue. Residues histidine 281 and lysine 352 each contribute to the 7-phospho-2-dehydro-3-deoxy-D-arabino-heptonate site. Histidine 281 serves as a coordination point for Zn(2+). The interval 393 to 843 (VHPFDDKLIP…WDILHTKFKV (451 aa)) is EPSP synthase. The active-site For EPSP synthase activity is the cysteine 825. The segment at 868 to 1058 (KRSIIVIGMR…IPKKRSFYTS (191 aa)) is shikimate kinase. 875–882 (GMRGAGKS) is an ATP binding site. Positions 1059–1271 (LTFSDLTEVA…GNEGALDVAQ (213 aa)) are 3-dehydroquinase. The active-site Schiff-base intermediate with substrate; for 3-dehydroquinate dehydratase activity is the lysine 1204. Residues 1284 to 1571 (EKHFWIVGNP…DVVHDAVVNQ (288 aa)) form a shikimate dehydrogenase region.

In the N-terminal section; belongs to the sugar phosphate cyclases superfamily. Dehydroquinate synthase family. The protein in the 2nd section; belongs to the EPSP synthase family. It in the 3rd section; belongs to the shikimate kinase family. This sequence in the 4th section; belongs to the type-I 3-dehydroquinase family. In the C-terminal section; belongs to the shikimate dehydrogenase family. Homodimer. It depends on Zn(2+) as a cofactor.

The protein resides in the cytoplasm. The catalysed reaction is 7-phospho-2-dehydro-3-deoxy-D-arabino-heptonate = 3-dehydroquinate + phosphate. It catalyses the reaction 3-dehydroquinate = 3-dehydroshikimate + H2O. It carries out the reaction shikimate + NADP(+) = 3-dehydroshikimate + NADPH + H(+). The enzyme catalyses shikimate + ATP = 3-phosphoshikimate + ADP + H(+). The catalysed reaction is 3-phosphoshikimate + phosphoenolpyruvate = 5-O-(1-carboxyvinyl)-3-phosphoshikimate + phosphate. It participates in metabolic intermediate biosynthesis; chorismate biosynthesis; chorismate from D-erythrose 4-phosphate and phosphoenolpyruvate: step 2/7. Its pathway is metabolic intermediate biosynthesis; chorismate biosynthesis; chorismate from D-erythrose 4-phosphate and phosphoenolpyruvate: step 3/7. The protein operates within metabolic intermediate biosynthesis; chorismate biosynthesis; chorismate from D-erythrose 4-phosphate and phosphoenolpyruvate: step 4/7. It functions in the pathway metabolic intermediate biosynthesis; chorismate biosynthesis; chorismate from D-erythrose 4-phosphate and phosphoenolpyruvate: step 5/7. It participates in metabolic intermediate biosynthesis; chorismate biosynthesis; chorismate from D-erythrose 4-phosphate and phosphoenolpyruvate: step 6/7. Its function is as follows. The AROM polypeptide catalyzes 5 consecutive enzymatic reactions in prechorismate polyaromatic amino acid biosynthesis. This chain is Pentafunctional AROM polypeptide, found in Scheffersomyces stipitis (strain ATCC 58785 / CBS 6054 / NBRC 10063 / NRRL Y-11545) (Yeast).